The primary structure comprises 263 residues: NADH dehydrogenase [ubiquinone] iron-sulfur protein 3, mitochondrial (263 aa).

A mitochondrion-targeting transit peptide spans 1–35; sequence MVAAVARLWWRGLLGASALTRGAGRPSVLLLPVRR.

The protein belongs to the complex I 30 kDa subunit family. As to quaternary structure, core subunit of respiratory chain NADH dehydrogenase (Complex I) which is composed of 45 different subunits. Interacts with NDUFAF3. Interacts with RAB5IF. Found in subcomplexes containing subunits NDUFS2, MT-ND1 and NDUFA13.

It is found in the mitochondrion inner membrane. It catalyses the reaction a ubiquinone + NADH + 5 H(+)(in) = a ubiquinol + NAD(+) + 4 H(+)(out). In terms of biological role, core subunit of the mitochondrial membrane respiratory chain NADH dehydrogenase (Complex I) which catalyzes electron transfer from NADH through the respiratory chain, using ubiquinone as an electron acceptor. Essential for the catalytic activity and assembly of complex I. The sequence is that of NADH dehydrogenase [ubiquinone] iron-sulfur protein 3, mitochondrial (NDUFS3) from Gorilla gorilla gorilla (Western lowland gorilla).